The primary structure comprises 178 residues: Oligoribonuclease (178 aa).

Residues 7 to 168 (LIWIDLEMTG…DDIRESIAEL (162 aa)) form the Exonuclease domain. Residue tyrosine 128 is part of the active site.

The protein belongs to the oligoribonuclease family.

The protein resides in the cytoplasm. 3'-to-5' exoribonuclease specific for small oligoribonucleotides. The sequence is that of Oligoribonuclease from Francisella tularensis subsp. tularensis (strain FSC 198).